The following is a 388-amino-acid chain: MTSLFRRSSSGSGGGGATGARGAGTGAGDGSTAPQELNNSRPARQVRRLEFNQAMDDFKTMFPNMDYDIIECVLRANSGAVDATIDQLLQMNLEAGGGSAYEDSSDSEDSIPPEILERTLEPDSSEEEPPPVYSPPAYHMHVFDRPYLMAPPTPPPRIDVPGSGQPASQRRYRNWNPPLLGSLPDDFLRILPQQMDSIQGHPGGSKPMSGEGGPPPAPGPMACDQDSRWKQYLEDERIALFLQNEEFMKELQRNRDFLLALERDRLKYESQKSKSNNAAVGNDGGFPSSVPGTSETNPTVSEDALFRDKLKHMGKSTRRKLFELARAFSEKTKMRKSKKKHLPKLQSLGAAASTANLLDDVEGHAYEEDFRGRRQEVPKVEEALREGQ.

The span at 1 to 10 (MTSLFRRSSS) shows a compositional bias: low complexity. Positions 1–45 (MTSLFRRSSSGSGGGGATGARGAGTGAGDGSTAPQELNNSRPARQ) are disordered. Residues 11–29 (GSGGGGATGARGAGTGAGD) show a composition bias toward gly residues. The CUE domain occupies 50 to 93 (EFNQAMDDFKTMFPNMDYDIIECVLRANSGAVDATIDQLLQMNL). 4 disordered regions span residues 152 to 178 (PTPP…WNPP), 196 to 225 (DSIQ…ACDQ), 270 to 302 (SQKS…TVSE), and 369 to 388 (DFRG…REGQ). Over residues 290–300 (VPGTSETNPTV) the composition is skewed to polar residues.

The sequence is that of CUE domain-containing protein 1 (Cuedc1) from Mus musculus (Mouse).